The sequence spans 185 residues: Ribosome-recycling factor (185 aa).

This sequence belongs to the RRF family.

It localises to the cytoplasm. Functionally, responsible for the release of ribosomes from messenger RNA at the termination of protein biosynthesis. May increase the efficiency of translation by recycling ribosomes from one round of translation to another. This Neisseria meningitidis serogroup A / serotype 4A (strain DSM 15465 / Z2491) protein is Ribosome-recycling factor.